We begin with the raw amino-acid sequence, 607 residues long: Albumin (607 aa).

Residues 1–18 form the signal peptide; it reads MKWVTFISLLLLFSSAYS. Residues 19-24 constitute a propeptide that is removed on maturation; it reads RGVFRR. Albumin domains are found at residues 19–209, 210–402, and 403–600; these read RGVF…DAMR, EKVL…KLKH, and LVDE…KLVA. A Cu cation-binding site is contributed by H27. S29 carries the phosphoserine modification. Residues E30 and D37 each coordinate Ca(2+). A disulfide bond links C77 and C86. 2 positions are modified to phosphoserine: S82 and S89. H91 is a binding site for Zn(2+). Disulfide bonds link C99-C115, C114-C125, C147-C192, C191-C200, C223-C269, and C268-C276. Phosphothreonine is present on T107. Residue K228 is modified to N6-succinyllysine. E267 serves as a coordination point for Ca(2+). Residues H270 and D272 each contribute to the Zn(2+) site. Ca(2+)-binding residues include D272, E275, D278, and D282. 8 disulfide bridges follow: C288–C302, C301–C312, C339–C384, C383–C392, C415–C461, C460–C471, C484–C500, and C499–C510. Phosphoserine is present on S296. Residue S442 is modified to Phosphoserine. Phosphothreonine is present on residues T443 and T445. Position 459 is an N6-succinyllysine (K459). Residue S512 is modified to Phosphoserine. 2 disulfide bridges follow: C537/C582 and C581/C590. The residue at position 557 (K557) is an N6-methyllysine. The residue at position 569 (T569) is a Phosphothreonine. The residue at position 587 (K587) is an N6-succinyllysine.

It belongs to the ALB/AFP/VDB family. Interacts with FCGRT; this interaction regulates ALB homeostasis. Interacts with TASOR. In plasma, occurs in a covalently-linked complex with chromophore-bound alpha-1-microglobulin; this interaction does not prevent fatty acid binding to ALB. Post-translationally, phosphorylated by FAM20C in the extracellular medium. As to expression, plasma.

It localises to the secreted. In terms of biological role, binds water, Ca(2+), Na(+), K(+), fatty acids, hormones, bilirubin and drugs. Its main function is the regulation of the colloidal osmotic pressure of blood. Major zinc transporter in plasma, typically binds about 80% of all plasma zinc. Major calcium and magnesium transporter in plasma, binds approximately 45% of circulating calcium and magnesium in plasma. Potentially has more than two calcium-binding sites and might additionally bind calcium in a non-specific manner. The shared binding site between zinc and calcium at residue Asp-272 suggests a crosstalk between zinc and calcium transport in the blood. The rank order of affinity is zinc &gt; calcium &gt; magnesium. Binds to the bacterial siderophore enterobactin and inhibits enterobactin-mediated iron uptake of E.coli from ferric transferrin, and may thereby limit the utilization of iron and growth of enteric bacteria such as E.coli. Does not prevent iron uptake by the bacterial siderophore aerobactin. This is Albumin (ALB) from Ovis aries (Sheep).